The chain runs to 151 residues: Large ribosomal subunit protein uL22 (151 aa).

A compositionally biased stretch (polar residues) spans 1–18 (MARINYSINGDPETTSKA). Residues 1 to 23 (MARINYSINGDPETTSKAMGSEL) are disordered.

The protein belongs to the universal ribosomal protein uL22 family. Part of the 50S ribosomal subunit.

In terms of biological role, this protein binds specifically to 23S rRNA. It makes multiple contacts with different domains of the 23S rRNA in the assembled 50S subunit and ribosome. Functionally, the globular domain of the protein is located near the polypeptide exit tunnel on the outside of the subunit, while an extended beta-hairpin is found that lines the wall of the exit tunnel in the center of the 70S ribosome. In Methanosarcina acetivorans (strain ATCC 35395 / DSM 2834 / JCM 12185 / C2A), this protein is Large ribosomal subunit protein uL22.